The following is a 1896-amino-acid chain: Obscurin-like protein 1 (1896 aa).

Residue serine 10 is modified to Phosphoserine. One can recognise an Ig-like 1 domain in the interval 12–100 (PCFLRFPRPV…GEAYAAAAVT (89 aa)). The interaction with TTN stretch occupies residues 17–19 (FPR). Residues cysteine 33 and cysteine 84 are joined by a disulfide bond. Positions 85-94 (RARNAAGEAY) are interaction with TTN. The interval 106-127 (ASDPELQPAERPLPSPGSGEGA) is disordered. Ig-like domains follow at residues 128–225 (PVFL…ALLQ), 243–330 (PVVE…QTLS), and 339–425 (PRLR…ANVT). 3 disulfide bridges follow: cysteine 149-cysteine 209, cysteine 267-cysteine 319, and cysteine 362-cysteine 412. A Fibronectin type-III domain is found at 517 to 615 (PPGPPILAEM…FHGSAHLVPT (99 aa)). 10 consecutive Ig-like domains span residues 714-800 (PVHI…FGVT), 804-893 (PPVH…VTIT), 902-982 (PSGK…FTVT), 986-1075 (PPVR…VTVT), 1078-1172 (PERI…PPVQ), 1174-1261 (LALE…FTVQ), 1265-1357 (PPVR…VEEP), 1357-1534 (PLLV…ARLS), 1628-1720 (PVTI…RTVA), and 1794-1896 (PAQS…VEGN). Disulfide bonds link cysteine 738-cysteine 788, cysteine 829-cysteine 879, cysteine 920-cysteine 970, cysteine 1011-cysteine 1061, cysteine 1103-cysteine 1153, and cysteine 1195-cysteine 1245. Intrachain disulfides connect cysteine 1381/cysteine 1522 and cysteine 1650/cysteine 1700.

Component of the 3M complex, composed of core components CUL7, CCDC8 and OBSL1. Interacts with CCDC8. Interacts with CUL7; the interaction is direct. Interacts with FBXW8. Interacts (via N-terminal Ig-like domain) with TTN/titin (via C-terminal Ig-like domain); the interaction is direct. In terms of tissue distribution, widely expressed, with predominant levels found in the heart.

The protein localises to the cytoplasm. Its subcellular location is the cytoskeleton. It localises to the microtubule organizing center. The protein resides in the centrosome. It is found in the perinuclear region. The protein localises to the golgi apparatus. Functionally, core component of the 3M complex, a complex required to regulate microtubule dynamics and genome integrity. It is unclear how the 3M complex regulates microtubules, it could act by controlling the level of a microtubule stabilizer. Acts as a regulator of the Cul7-RING(FBXW8) ubiquitin-protein ligase, playing a critical role in the ubiquitin ligase pathway that regulates Golgi morphogenesis and dendrite patterning in brain. Required to localize CUL7 to the Golgi apparatus in neurons. In Homo sapiens (Human), this protein is Obscurin-like protein 1.